Consider the following 703-residue polypeptide: Methionine--tRNA ligase (703 aa).

The short motif at 12 to 22 is the 'HIGH' region element; the sequence is PYANGPLHIGH. Residues cysteine 143, cysteine 146, cysteine 156, and cysteine 159 each coordinate Zn(2+). The short motif at 331–335 is the 'KMSKS' region element; it reads KMSKT. Position 334 (lysine 334) interacts with ATP. 2 stretches are compositionally biased toward low complexity: residues 556–568 and 577–594; these read AAPQAAEARPAKG and EAPAATQAAAPSAGAAES. Disordered regions lie at residues 556–594 and 682–703; these read AAPQAAEARPAKGAKTEKKPAEAPAATQAAAPSAGAAES and GPGGKELSLLDPGDVAPGSEVK. The tRNA-binding domain occupies 602 to 703; sequence DFAKVVLKAG…GDVAPGSEVK (102 aa).

The protein belongs to the class-I aminoacyl-tRNA synthetase family. MetG type 1 subfamily. Homodimer. Zn(2+) serves as cofactor.

It is found in the cytoplasm. The enzyme catalyses tRNA(Met) + L-methionine + ATP = L-methionyl-tRNA(Met) + AMP + diphosphate. Functionally, is required not only for elongation of protein synthesis but also for the initiation of all mRNA translation through initiator tRNA(fMet) aminoacylation. This is Methionine--tRNA ligase from Myxococcus xanthus (strain DK1622).